The primary structure comprises 291 residues: Pantothenate synthetase (291 aa).

Residue 33 to 40 participates in ATP binding; the sequence is MGALHEGH. H40 acts as the Proton donor in catalysis. Q64 provides a ligand contact to (R)-pantoate. Residue Q64 participates in beta-alanine binding. 157–160 contributes to the ATP binding site; it reads GEKD. A (R)-pantoate-binding site is contributed by Q163. Residues V186 and 194–197 contribute to the ATP site; that span reads LSSR.

Belongs to the pantothenate synthetase family. As to quaternary structure, homodimer.

Its subcellular location is the cytoplasm. The catalysed reaction is (R)-pantoate + beta-alanine + ATP = (R)-pantothenate + AMP + diphosphate + H(+). It functions in the pathway cofactor biosynthesis; (R)-pantothenate biosynthesis; (R)-pantothenate from (R)-pantoate and beta-alanine: step 1/1. Functionally, catalyzes the condensation of pantoate with beta-alanine in an ATP-dependent reaction via a pantoyl-adenylate intermediate. In Rubrobacter xylanophilus (strain DSM 9941 / JCM 11954 / NBRC 16129 / PRD-1), this protein is Pantothenate synthetase.